The primary structure comprises 946 residues: Bifunctional glutamine synthetase adenylyltransferase/adenylyl-removing enzyme (946 aa).

An adenylyl removase region spans residues 1–440 (MKPLSSPLQQ…VFNELIGDDE (440 aa)). Residues 449–946 (SEQWRELWQD…VSWQKWLVEE (498 aa)) are adenylyl transferase.

Belongs to the GlnE family. The cofactor is Mg(2+).

The catalysed reaction is [glutamine synthetase]-O(4)-(5'-adenylyl)-L-tyrosine + phosphate = [glutamine synthetase]-L-tyrosine + ADP. It carries out the reaction [glutamine synthetase]-L-tyrosine + ATP = [glutamine synthetase]-O(4)-(5'-adenylyl)-L-tyrosine + diphosphate. Its function is as follows. Involved in the regulation of glutamine synthetase GlnA, a key enzyme in the process to assimilate ammonia. When cellular nitrogen levels are high, the C-terminal adenylyl transferase (AT) inactivates GlnA by covalent transfer of an adenylyl group from ATP to specific tyrosine residue of GlnA, thus reducing its activity. Conversely, when nitrogen levels are low, the N-terminal adenylyl removase (AR) activates GlnA by removing the adenylyl group by phosphorolysis, increasing its activity. The regulatory region of GlnE binds the signal transduction protein PII (GlnB) which indicates the nitrogen status of the cell. The sequence is that of Bifunctional glutamine synthetase adenylyltransferase/adenylyl-removing enzyme from Escherichia coli (strain SMS-3-5 / SECEC).